The sequence spans 224 residues: Peroxiredoxin-6 (224 aa).

Residues 5-169 form the Thioredoxin domain; it reads LLLGDEAPNF…ILRVIISLQL (165 aa). The interval 31 to 40 is required and sufficient for targeting to lysosomes and lamellar bodies; it reads DSWGILFSHP. The residue at position 44 (threonine 44) is a Phosphothreonine. Cysteine 47 serves as the catalytic Cysteine sulfenic acid (-SOH) intermediate; for peroxidase activity. The residue at position 63 (lysine 63) is an N6-acetyllysine. Residue tyrosine 89 is modified to Phosphotyrosine. Aspartate 140 (for phospholipase activity) is an active-site residue. Position 177 is a phosphothreonine; by MAPK (threonine 177). Residue lysine 209 is modified to N6-acetyllysine; alternate. N6-succinyllysine; alternate is present on lysine 209.

Belongs to the peroxiredoxin family. Prx6 subfamily. As to quaternary structure, homodimer. Interacts with GSTP1; mediates PRDX6 glutathionylation and regeneration. Interacts with APEX1. Interacts with STH. May interact with FAM168B. May interact with HTR2A. Does not need Ca(2+) as cofactor. is required as a cofactor. In terms of processing, irreversibly inactivated by overoxidation of Cys-47 to sulfinic acid (Cys-SO(2)H) and sulfonic acid (Cys-SO(3)H) forms upon oxidative stress. Phosphorylation at Thr-177 by MAP kinases increases the phospholipase activity of the enzyme. The phosphorylated form exhibits a greater lysophosphatidylcholine acyltransferase activity compared to the non-phosphorylated form.

It is found in the cytoplasm. It localises to the lysosome. The catalysed reaction is a hydroperoxide + 2 glutathione = an alcohol + glutathione disulfide + H2O. It catalyses the reaction a 1,2-diacyl-sn-glycero-3-phosphocholine + H2O = a 1-acyl-sn-glycero-3-phosphocholine + a fatty acid + H(+). The enzyme catalyses a 1-acyl-sn-glycero-3-phosphocholine + an acyl-CoA = a 1,2-diacyl-sn-glycero-3-phosphocholine + CoA. It carries out the reaction 1-hexadecanoyl-sn-glycero-3-phosphocholine + hexadecanoyl-CoA = 1,2-dihexadecanoyl-sn-glycero-3-phosphocholine + CoA. The catalysed reaction is 1,2-dihexadecanoyl-sn-glycero-3-phosphocholine + H2O = 1-hexadecanoyl-sn-glycero-3-phosphocholine + hexadecanoate + H(+). Functionally, thiol-specific peroxidase that catalyzes the reduction of hydrogen peroxide and organic hydroperoxides to water and alcohols, respectively. Can reduce H(2)O(2) and short chain organic, fatty acid, and phospholipid hydroperoxides. Also has phospholipase activity, and can therefore either reduce the oxidized sn-2 fatty acyl group of phospholipids (peroxidase activity) or hydrolyze the sn-2 ester bond of phospholipids (phospholipase activity). These activities are dependent on binding to phospholipids at acidic pH and to oxidized phospholipds at cytosolic pH. Plays a role in cell protection against oxidative stress by detoxifying peroxides and in phospholipid homeostasis. Exhibits acyl-CoA-dependent lysophospholipid acyltransferase which mediates the conversion of lysophosphatidylcholine (1-acyl-sn-glycero-3-phosphocholine or LPC) into phosphatidylcholine (1,2-diacyl-sn-glycero-3-phosphocholine or PC). Shows a clear preference for LPC as the lysophospholipid and for palmitoyl CoA as the fatty acyl substrate. In Bos taurus (Bovine), this protein is Peroxiredoxin-6 (PRDX6).